Here is a 261-residue protein sequence, read N- to C-terminus: Ribosomal RNA small subunit methyltransferase J (261 aa).

S-adenosyl-L-methionine-binding positions include 109-110 (RD), 125-126 (ER), and D179.

Belongs to the methyltransferase superfamily. RsmJ family.

It localises to the cytoplasm. The catalysed reaction is guanosine(1516) in 16S rRNA + S-adenosyl-L-methionine = N(2)-methylguanosine(1516) in 16S rRNA + S-adenosyl-L-homocysteine + H(+). Functionally, specifically methylates the guanosine in position 1516 of 16S rRNA. The polypeptide is Ribosomal RNA small subunit methyltransferase J (Pseudomonas aeruginosa (strain LESB58)).